The primary structure comprises 202 residues: Na(+)-translocating NADH-quinone reductase subunit E (202 aa).

6 helical membrane-spanning segments follow: residues 11–31 (AVFI…FLAV), 39–59 (FGLG…NNLI), 81–101 (FLKF…LEMA), 114–134 (GIFL…AFMV), 144–164 (VVFG…LAAV), and 180–200 (LGIT…FSGV).

This sequence belongs to the NqrDE/RnfAE family. Composed of six subunits; NqrA, NqrB, NqrC, NqrD, NqrE and NqrF.

The protein resides in the cell inner membrane. The catalysed reaction is a ubiquinone + n Na(+)(in) + NADH + H(+) = a ubiquinol + n Na(+)(out) + NAD(+). Its function is as follows. NQR complex catalyzes the reduction of ubiquinone-1 to ubiquinol by two successive reactions, coupled with the transport of Na(+) ions from the cytoplasm to the periplasm. NqrA to NqrE are probably involved in the second step, the conversion of ubisemiquinone to ubiquinol. The polypeptide is Na(+)-translocating NADH-quinone reductase subunit E (Idiomarina loihiensis (strain ATCC BAA-735 / DSM 15497 / L2-TR)).